Consider the following 104-residue polypeptide: Large ribosomal subunit protein uL24 (104 aa).

The protein belongs to the universal ribosomal protein uL24 family. As to quaternary structure, part of the 50S ribosomal subunit.

In terms of biological role, one of two assembly initiator proteins, it binds directly to the 5'-end of the 23S rRNA, where it nucleates assembly of the 50S subunit. One of the proteins that surrounds the polypeptide exit tunnel on the outside of the subunit. The polypeptide is Large ribosomal subunit protein uL24 (Escherichia coli O81 (strain ED1a)).